Reading from the N-terminus, the 357-residue chain is 3-isopropylmalate dehydrogenase (357 aa).

The substrate site is built by R97, R107, R135, and D224. Positions 224, 248, and 252 each coordinate Mg(2+). 282–294 provides a ligand contact to NAD(+); that stretch reads GSAPDIAGQDLAN.

This sequence belongs to the isocitrate and isopropylmalate dehydrogenases family. LeuB type 1 subfamily. Homodimer. Mg(2+) serves as cofactor. It depends on Mn(2+) as a cofactor.

The protein localises to the cytoplasm. It catalyses the reaction (2R,3S)-3-isopropylmalate + NAD(+) = 4-methyl-2-oxopentanoate + CO2 + NADH. It functions in the pathway amino-acid biosynthesis; L-leucine biosynthesis; L-leucine from 3-methyl-2-oxobutanoate: step 3/4. Functionally, catalyzes the oxidation of 3-carboxy-2-hydroxy-4-methylpentanoate (3-isopropylmalate) to 3-carboxy-4-methyl-2-oxopentanoate. The product decarboxylates to 4-methyl-2 oxopentanoate. The polypeptide is 3-isopropylmalate dehydrogenase (Prochlorococcus marinus (strain MIT 9313)).